Here is a 217-residue protein sequence, read N- to C-terminus: Protein-L-isoaspartate O-methyltransferase (217 aa).

Residue Ser-65 is part of the active site.

The protein belongs to the methyltransferase superfamily. L-isoaspartyl/D-aspartyl protein methyltransferase family.

The protein localises to the cytoplasm. It carries out the reaction [protein]-L-isoaspartate + S-adenosyl-L-methionine = [protein]-L-isoaspartate alpha-methyl ester + S-adenosyl-L-homocysteine. Catalyzes the methyl esterification of L-isoaspartyl residues in peptides and proteins that result from spontaneous decomposition of normal L-aspartyl and L-asparaginyl residues. It plays a role in the repair and/or degradation of damaged proteins. The polypeptide is Protein-L-isoaspartate O-methyltransferase (Chlorobium limicola (strain DSM 245 / NBRC 103803 / 6330)).